We begin with the raw amino-acid sequence, 534 residues long: Ankyrin repeat domain-containing protein 34C (534 aa).

4 ANK repeats span residues 10–39 (TDGN…YINE), 43–80 (KGET…DPNI), 84–114 (SGKT…DPSL), and 118–147 (TGAS…AKGK). Positions 159 to 205 (SGTKTTKQYLNVPPSPKVEDRQSPPLCTTPSDVELKTSGLASPPSEK) are disordered. Residue S301 is modified to Phosphoserine. Disordered regions lie at residues 332-368 (YEKG…LKDP) and 384-403 (QPVG…GPLD). S446 carries the phosphoserine modification. The disordered stretch occupies residues 480–503 (SKPASPLASGLKSMAPVAPNSPKR).

The protein belongs to the ANKRD34 family.

The sequence is that of Ankyrin repeat domain-containing protein 34C (Ankrd34c) from Mus musculus (Mouse).